Reading from the N-terminus, the 276-residue chain is Ice-binding protein (276 aa).

The N-terminal stretch at 1 to 24 is a signal peptide; sequence MKILKRIPVLAVLLVGLMTNCSND. The short motif at 79–82 is the Ice-binding site motif (T-A/G-X-T/N) 1 element; sequence TGIT. Residues Cys-107 and Cys-124 are joined by a disulfide bond. 2 consecutive short sequence motifs (ice-binding site motif (T-A/G-X-T/N)) follow at residues 245 to 248 and 263 to 266; these read TGIN and TAVT.

This sequence belongs to the ice-binding protein family. Monomer.

The protein localises to the secreted. In terms of biological role, has antifreeze activity for survival in a subzero environment. Binds to the surface of ice crystals and inhibits their growth. Has high thermal hysteresis (TH) activity, which is the ability to lower the freezing point of an aqueous solution below its melting point, and thus the freezing of the cell fluid can be prevented protecting the organism from ice damage. The TH activity of this protein is 2.2 degrees Celsius at 5 uM and 2.5 degrees Celsius at 50 uM. The chain is Ice-binding protein from Flavobacterium frigoris (strain PS1).